A 1738-amino-acid chain; its full sequence is Interaptin (1738 aa).

An actin-binding region spans residues 1–248; that stretch reads MEHSTPLNEE…TYISLFPKVY (248 aa). At 1–1705 the chain is on the cytoplasmic side; the sequence is MEHSTPLNEE…RIFPSKNTRP (1705 aa). Calponin-homology (CH) domains follow at residues 22-128 and 146-249; these read IAQK…LRYQ and TKPS…KVYQ. Disordered stretches follow at residues 285 to 350, 1068 to 1090, and 1589 to 1627; these read SKST…SNLS, IQQL…SEKD, and LQQQ…PNQI. The segment covering 292-301 has biased composition (low complexity); it reads QQNQQQQQQN. Positions 302–316 are enriched in polar residues; it reads LLSPNSYRNSISFSK. Composition is skewed to low complexity over residues 317–344, 1068–1086, and 1589–1617; these read SPSF…NSTT, IQQL…SNQL, and LQQQ…SSTP. Positions 373-1598 form a coiled coil; that stretch reads EESRVIEKIV…LQQQKQQQQQ (1226 aa). A helical; Anchor for type IV membrane protein transmembrane segment spans residues 1706-1726; that stretch reads IFDWRALFFIGAAVLAISTLF.

The protein belongs to the alpha-actinin family.

It is found in the nucleus membrane. It localises to the endoplasmic reticulum membrane. The protein localises to the golgi apparatus. Its subcellular location is the golgi stack membrane. The protein resides in the cytoplasm. It is found in the cytoskeleton. It localises to the microtubule organizing center. The protein localises to the centrosome. In terms of biological role, may function as linker between cellular membranes and the actin cytoskeleton. Required for normal development of fruiting bodies. The chain is Interaptin (abpD) from Dictyostelium discoideum (Social amoeba).